Consider the following 823-residue polypeptide: Leucine--tRNA ligase (823 aa).

Residues 42–52 (PYPSGTLHMGH) carry the 'HIGH' region motif. A 'KMSKS' region motif is present at residues 575-579 (KMSKS). K578 is an ATP binding site.

It belongs to the class-I aminoacyl-tRNA synthetase family.

It is found in the cytoplasm. It catalyses the reaction tRNA(Leu) + L-leucine + ATP = L-leucyl-tRNA(Leu) + AMP + diphosphate. This Legionella pneumophila (strain Corby) protein is Leucine--tRNA ligase.